A 1108-amino-acid polypeptide reads, in one-letter code: Retinal guanylyl cyclase 1 (1108 aa).

Positions 1 to 54 are cleaved as a signal peptide; the sequence is MSAWLLPAGGLPGAGFCVPARQSPSSFSRVLRWPRPGLPGLLLLLLLPSPSALS. Residues 55–465 lie on the Extracellular side of the membrane; it reads AVFKVGVLGP…PDVICNGGVE (411 aa). C108 and C136 are oxidised to a cystine. N300 is a glycosylation site (N-linked (GlcNAc...) asparagine). The helical transmembrane segment at 466 to 490 threads the bilayer; the sequence is PGLVFVGFLLVIGMGLTGAFLAHYL. The region spanning 491–811 is the Protein kinase domain; it reads RHRLLHMQMA…DLTFDLFKSI (321 aa). At 491–1108 the chain is on the cytoplasmic side; the sequence is RHRLLHMQMA…KARPGQFTGK (618 aa). Positions 883-1013 constitute a Guanylate cyclase domain; the sequence is TLYFSDIVGF…DTVNTASRME (131 aa). A disordered region spans residues 1069–1108; that stretch reads IPKPPDLQPGASNHGISLQEIPPERRKKLEKARPGQFTGK.

The protein belongs to the adenylyl cyclase class-4/guanylyl cyclase family. Homodimer; requires homodimerization for guanylyl cyclase activity. Interacts (via C-terminus) with RD3 (via C-terminus); promotes the exit of GUCY2E from the endoplasmic reticulum and its trafficking to the photoreceptor outer segments. Interaction with RD3 negatively regulates GUCY2E guanylate cyclase activity. Post-translationally, there are 9 conserved cysteine residues in sensory guanylate cyclases, 6 in the extracellular domain, which may be involved in intra- or interchain disulfide bonds.

Its subcellular location is the photoreceptor outer segment membrane. It is found in the endoplasmic reticulum membrane. It catalyses the reaction GTP = 3',5'-cyclic GMP + diphosphate. Its activity is regulated as follows. Activated by GUCA1A when free calcium ions concentration is low, and inhibited by GUCA1A when free calcium ions concentration is high. Negatively regulated by RD3; RD3 inhibits the basal and GUCA1A-stimulated guanylate cyclase activity. Its function is as follows. Catalyzes the synthesis of cyclic GMP (cGMP) in rods and cones of photoreceptors. Plays an essential role in phototransduction, by mediating cGMP replenishment. May also participate in the trafficking of membrane-asociated proteins to the photoreceptor outer segment membrane. This chain is Retinal guanylyl cyclase 1 (Gucy2e), found in Mus musculus (Mouse).